Here is a 59-residue protein sequence, read N- to C-terminus: Potassium channel toxin alpha-KTx 1.2 (59 aa).

An N-terminal signal peptide occupies residues 1 to 22 (MKILSVLLLALIICSIIDWSEG). At Q23 the chain carries Pyrrolidone carboxylic acid. 3 cysteine pairs are disulfide-bonded: C29-C50, C35-C55, and C39-C57. Residues 48-55 (GKCMNKKC) are interaction with Ca(2+)-activated K(+) channels.

The protein belongs to the short scorpion toxin superfamily. Potassium channel inhibitor family. Alpha-KTx 01 subfamily. In terms of tissue distribution, expressed by the venom gland.

It is found in the secreted. Functionally, blocks calcium-activated potassium channels (Kd=43 nM on KCa1.1/KCNMA1). Has a potent presynaptic facilitatory action, with less effect on direct muscle stimulation. The sequence is that of Potassium channel toxin alpha-KTx 1.2 from Leiurus hebraeus (Hebrew deathstalker scorpion).